Consider the following 287-residue polypeptide: Leucine-rich repeat-containing protein 72 (287 aa).

4 LRR repeats span residues 46 to 67 (DVFE…SRFK), 68 to 89 (KLKY…TRNY), 90 to 111 (CLTE…HYLP), and 112 to 133 (SLHI…VKEL). The region spanning 147–185 (NPLCQYNLYRLYIIYHLPGVELLDRNQVTEKERRSMITI) is the LRRCT domain.

This Homo sapiens (Human) protein is Leucine-rich repeat-containing protein 72 (LRRC72).